The following is a 71-amino-acid chain: Calcium dodecin (71 aa).

E18 contacts Ca(2+).

This sequence belongs to the dodecin family. Homododecamer; 12 subunits assemble to form a hollow sphere with a diameter of about 75 Angstroms. Calcium ions are bound at the interface between three subunits.

Functionally, binds calcium ions. May play a role in sequestering additional small ligands. In Mycobacterium tuberculosis (strain ATCC 25618 / H37Rv), this protein is Calcium dodecin (secE2).